Consider the following 149-residue polypeptide: NADH-ubiquinone oxidoreductase chain 6 (149 aa).

4 consecutive transmembrane segments (helical) span residues 23–43, 51–71, 83–103, and 114–134; these read ILMLSSLILLTLFLSLIFYFI, MMMILIILGGMLIIFMYMISL, LSVTFTMMLILIPYDSFMTKL, and VNFVNMIILMMIFLIVMLTII.

This sequence belongs to the complex I subunit 6 family.

The protein localises to the mitochondrion membrane. It carries out the reaction a ubiquinone + NADH + 5 H(+)(in) = a ubiquinol + NAD(+) + 4 H(+)(out). In terms of biological role, core subunit of the mitochondrial membrane respiratory chain NADH dehydrogenase (Complex I) that is believed to belong to the minimal assembly required for catalysis. Complex I functions in the transfer of electrons from NADH to the respiratory chain. The immediate electron acceptor for the enzyme is believed to be ubiquinone. This is NADH-ubiquinone oxidoreductase chain 6 (ND6) from Rhipicephalus sanguineus (Brown dog tick).